Reading from the N-terminus, the 193-residue chain is Ribosome maturation factor RimM (193 aa).

Residues 100–173 (DDEFYYADLE…TLLIDPLAAG (74 aa)) enclose the PRC barrel domain.

It belongs to the RimM family. In terms of assembly, binds ribosomal protein uS19.

The protein resides in the cytoplasm. In terms of biological role, an accessory protein needed during the final step in the assembly of 30S ribosomal subunit, possibly for assembly of the head region. Essential for efficient processing of 16S rRNA. May be needed both before and after RbfA during the maturation of 16S rRNA. It has affinity for free ribosomal 30S subunits but not for 70S ribosomes. The sequence is that of Ribosome maturation factor RimM from Rhizobium etli (strain CIAT 652).